We begin with the raw amino-acid sequence, 511 residues long: Histidine ammonia-lyase (511 aa).

Positions 142–144 (ASG) form a cross-link, 5-imidazolinone (Ala-Gly). Serine 143 bears the 2,3-didehydroalanine (Ser) mark.

It belongs to the PAL/histidase family. Post-translationally, contains an active site 4-methylidene-imidazol-5-one (MIO), which is formed autocatalytically by cyclization and dehydration of residues Ala-Ser-Gly.

It localises to the cytoplasm. The enzyme catalyses L-histidine = trans-urocanate + NH4(+). It participates in amino-acid degradation; L-histidine degradation into L-glutamate; N-formimidoyl-L-glutamate from L-histidine: step 1/3. This is Histidine ammonia-lyase from Rhizobium rhizogenes (strain K84 / ATCC BAA-868) (Agrobacterium radiobacter).